Consider the following 595-residue polypeptide: Aspartate--tRNA(Asp/Asn) ligase (595 aa).

Glu175 is an L-aspartate binding site. An aspartate region spans residues Gln199–Lys202. Arg221 and His454 together coordinate L-aspartate. ATP is bound at residue Arg221–Glu223. ATP is bound at residue Glu488. Arg495 lines the L-aspartate pocket. Residue Gly540–Arg543 participates in ATP binding.

This sequence belongs to the class-II aminoacyl-tRNA synthetase family. Type 1 subfamily. Homodimer.

It is found in the cytoplasm. The catalysed reaction is tRNA(Asx) + L-aspartate + ATP = L-aspartyl-tRNA(Asx) + AMP + diphosphate. Aspartyl-tRNA synthetase with relaxed tRNA specificity since it is able to aspartylate not only its cognate tRNA(Asp) but also tRNA(Asn). Reaction proceeds in two steps: L-aspartate is first activated by ATP to form Asp-AMP and then transferred to the acceptor end of tRNA(Asp/Asn). The polypeptide is Aspartate--tRNA(Asp/Asn) ligase (Agrobacterium fabrum (strain C58 / ATCC 33970) (Agrobacterium tumefaciens (strain C58))).